The following is a 342-amino-acid chain: Flagellar P-ring protein (342 aa).

The signal sequence occupies residues 1–19 (MKRVFLWLIFVLAFHKLLA).

It belongs to the FlgI family. The basal body constitutes a major portion of the flagellar organelle and consists of four rings (L,P,S, and M) mounted on a central rod.

Its subcellular location is the periplasm. The protein localises to the bacterial flagellum basal body. Its function is as follows. Assembles around the rod to form the L-ring and probably protects the motor/basal body from shearing forces during rotation. In Helicobacter pylori (strain G27), this protein is Flagellar P-ring protein.